We begin with the raw amino-acid sequence, 148 residues long: MKALLVLGFLLLSASVQAKIYERCQFARTLKRNGMSGYYGVSLADWVCLAQHESNYNTQARNYNPGDQSTDYGIFQINSRYWCNDGKTPRAKNACGIPCSALLQDDITQAIQCAKRVVRDPQGIRAWVAWQRHCKNRDLSGYIRNCGV.

The N-terminal stretch at 1–18 (MKALLVLGFLLLSASVQA) is a signal peptide. The 130-residue stretch at 19 to 148 (KIYERCQFAR…LSGYIRNCGV (130 aa)) folds into the C-type lysozyme domain. Cystine bridges form between Cys-24-Cys-146, Cys-48-Cys-134, Cys-83-Cys-99, and Cys-95-Cys-113. Catalysis depends on residues Glu-53 and Asp-71.

Belongs to the glycosyl hydrolase 22 family. In terms of assembly, monomer. Expressed in lung, small intestine and spleen.

Its subcellular location is the secreted. The enzyme catalyses Hydrolysis of (1-&gt;4)-beta-linkages between N-acetylmuramic acid and N-acetyl-D-glucosamine residues in a peptidoglycan and between N-acetyl-D-glucosamine residues in chitodextrins.. Functionally, lysozymes have primarily a bacteriolytic function; those in tissues and body fluids are associated with the monocyte-macrophage system and enhance the activity of immunoagents. In the intestine they may also have a digestive function. In Rattus norvegicus (Rat), this protein is Lysozyme C-1 (Lyz1).